Consider the following 210-residue polypeptide: 3-oxo-tetronate 4-phosphate decarboxylase (210 aa).

Catalysis depends on E74, which acts as the Proton acceptor. Zn(2+)-binding residues include E74, H93, and H95. The active-site Proton donor is Y120. H160 serves as a coordination point for Zn(2+).

It belongs to the aldolase class II family. AraD/FucA subfamily. Zn(2+) serves as cofactor.

The enzyme catalyses 3-dehydro-4-O-phospho-D-erythronate + H(+) = dihydroxyacetone phosphate + CO2. It carries out the reaction 3-dehydro-4-O-phospho-L-erythronate + H(+) = dihydroxyacetone phosphate + CO2. In terms of biological role, catalyzes the decarboxylation of 3-oxo-tetronate 4-phosphate to dihydroxyacetone phosphate (DHAP) and CO(2). The polypeptide is 3-oxo-tetronate 4-phosphate decarboxylase (Haemophilus influenzae (strain ATCC 51907 / DSM 11121 / KW20 / Rd)).